The chain runs to 139 residues: Ribulose bisphosphate carboxylase small subunit (139 aa).

Belongs to the RuBisCO small chain family. In terms of assembly, heterohexadecamer of 8 large and 8 small subunits.

Its subcellular location is the plastid. It localises to the chloroplast. Its function is as follows. RuBisCO catalyzes two reactions: the carboxylation of D-ribulose 1,5-bisphosphate, the primary event in carbon dioxide fixation, as well as the oxidative fragmentation of the pentose substrate in the photorespiration process. Both reactions occur simultaneously and in competition at the same active site. Although the small subunit is not catalytic it is essential for maximal activity. This chain is Ribulose bisphosphate carboxylase small subunit, found in Olisthodiscus luteus (Marine phytoflagellate).